A 143-amino-acid polypeptide reads, in one-letter code: Large ribosomal subunit protein uL16 (143 aa).

The span at 1-17 (MLQPKRTKFRKAHKGRI) shows a compositional bias: basic residues. Positions 1–21 (MLQPKRTKFRKAHKGRIHGNA) are disordered.

The protein belongs to the universal ribosomal protein uL16 family. As to quaternary structure, part of the 50S ribosomal subunit.

Functionally, binds 23S rRNA and is also seen to make contacts with the A and possibly P site tRNAs. This is Large ribosomal subunit protein uL16 from Rhizorhabdus wittichii (strain DSM 6014 / CCUG 31198 / JCM 15750 / NBRC 105917 / EY 4224 / RW1) (Sphingomonas wittichii).